The following is a 295-amino-acid chain: GTP cyclohydrolase FolE2 (295 aa).

Belongs to the GTP cyclohydrolase IV family.

The enzyme catalyses GTP + H2O = 7,8-dihydroneopterin 3'-triphosphate + formate + H(+). Its pathway is cofactor biosynthesis; 7,8-dihydroneopterin triphosphate biosynthesis; 7,8-dihydroneopterin triphosphate from GTP: step 1/1. Converts GTP to 7,8-dihydroneopterin triphosphate. This chain is GTP cyclohydrolase FolE2, found in Pseudomonas putida (strain W619).